A 340-amino-acid polypeptide reads, in one-letter code: Guanine nucleotide-binding protein G(I)/G(S)/G(T) subunit beta-1 (340 aa).

WD repeat units follow at residues 53–83, 95–125, 141–170, 182–212, 224–254, 268–298, and 310–340; these read GHLA…IVWD, LRSS…SIYS, GHTG…ALWD, GHTG…KLWD, GHES…RLFD, NIIC…NVWD, and GHDN…KIWN.

Belongs to the WD repeat G protein beta family. In terms of assembly, g proteins are composed of 3 units, alpha, beta and gamma.

Functionally, guanine nucleotide-binding proteins (G proteins) are involved as a modulator or transducer in various transmembrane signaling systems. The beta and gamma chains are required for the GTPase activity, for replacement of GDP by GTP, and for G protein-effector interaction. This chain is Guanine nucleotide-binding protein G(I)/G(S)/G(T) subunit beta-1 (GBETA1), found in Homarus americanus (American lobster).